The chain runs to 756 residues: Hormone-sensitive lipase (756 aa).

Positions 350-352 match the Involved in the stabilization of the negatively charged intermediate by the formation of the oxyanion hole motif; the sequence is HGG. Residue Ser424 is part of the active site. Disordered stretches follow at residues 542–570 and 581–600; these read SVSKTEPMRRSVSEAALTQPEGSLGTDSL and RNSSDTTDTPELSLSAETLG. Ser552 is subject to Phosphoserine; by PKA. At Ser554 the chain carries Phosphoserine; by AMPK. Residues 581-596 are compositionally biased toward polar residues; sequence RNSSDTTDTPELSLSA. 2 positions are modified to phosphoserine: Ser595 and Ser649. Residues Asp692 and His722 contribute to the active site.

It belongs to the 'GDXG' lipolytic enzyme family. In terms of assembly, monomer and homodimer. Interacts with CAVIN1 in the adipocyte cytoplasm. Interacts with PLIN5. Post-translationally, phosphorylation by AMPK reduces its translocation towards the lipid droplets.

It is found in the cell membrane. The protein resides in the membrane. Its subcellular location is the caveola. It localises to the cytoplasm. The protein localises to the cytosol. It is found in the lipid droplet. It catalyses the reaction a diacylglycerol + H2O = a monoacylglycerol + a fatty acid + H(+). The catalysed reaction is a triacylglycerol + H2O = a diacylglycerol + a fatty acid + H(+). The enzyme catalyses a monoacylglycerol + H2O = glycerol + a fatty acid + H(+). It carries out the reaction Hydrolyzes glycerol monoesters of long-chain fatty acids.. It catalyses the reaction 1,2-di-(9Z-octadecenoyl)-glycerol + (9Z)-octadecenoate + H(+) = 1,2,3-tri-(9Z-octadecenoyl)-glycerol + H2O. The catalysed reaction is 2,3-di-(9Z)-octadecenoyl-sn-glycerol + H2O = 2-(9Z-octadecenoyl)-glycerol + (9Z)-octadecenoate + H(+). The enzyme catalyses cholesteryl (9Z-octadecenoate) + H2O = cholesterol + (9Z)-octadecenoate + H(+). It carries out the reaction 1,2,3-tri-(9Z-octadecenoyl)-glycerol + H2O = di-(9Z)-octadecenoylglycerol + (9Z)-octadecenoate + H(+). It catalyses the reaction all-trans-retinyl hexadecanoate + H2O = all-trans-retinol + hexadecanoate + H(+). The catalysed reaction is 1,2-di-(9Z-octadecenoyl)-glycerol + H2O = (9Z-octadecenoyl)-glycerol + (9Z)-octadecenoate + H(+). The enzyme catalyses 2-(5Z,8Z,11Z,14Z-eicosatetraenoyl)-glycerol + H2O = glycerol + (5Z,8Z,11Z,14Z)-eicosatetraenoate + H(+). It carries out the reaction 1-(9Z-octadecenoyl)-glycerol + H2O = glycerol + (9Z)-octadecenoate + H(+). It catalyses the reaction 2-(9Z-octadecenoyl)-glycerol + H2O = glycerol + (9Z)-octadecenoate + H(+). The catalysed reaction is 1-O-hexadecyl-2-acetyl-sn-glycerol + H2O = 1-O-hexadecyl-sn-glycerol + acetate + H(+). The enzyme catalyses 1,2-di-(9Z-octadecenoyl)-sn-glycerol + H2O = (9Z-octadecenoyl)-glycerol + (9Z)-octadecenoate + H(+). It carries out the reaction 1,3-di-(9Z-octadecenoyl)-glycerol + H2O = 1-(9Z-octadecenoyl)-glycerol + (9Z)-octadecenoate + H(+). It catalyses the reaction 1,2-di-(9Z-octadecenoyl)-glycerol + H2O = 2-(9Z-octadecenoyl)-glycerol + (9Z)-octadecenoate + H(+). Its pathway is glycerolipid metabolism; triacylglycerol degradation. In terms of biological role, lipase with broad substrate specificity, catalyzing the hydrolysis of triacylglycerols (TAGs), diacylglycerols (DAGs), monoacylglycerols (MAGs), cholesteryl esters and retinyl esters. Shows a preferential hydrolysis of DAGs over TAGs and MAGs. Preferentially hydrolyzes fatty acid (FA) esters at the sn-3 position of the glycerol backbone in DAGs and FA esters at the sn-1 and sn-2 positions of the glycerol backbone in TAGs. Catalyzes the hydrolysis of 2-arachidonoylglycerol, an endocannabinoid and of 2-acetyl monoalkylglycerol ether, the penultimate precursor of the pathway for de novo synthesis of platelet-activating factor. In adipose tissue and heart, it primarily hydrolyzes stored triglycerides to free fatty acids, while in steroidogenic tissues, it principally converts cholesteryl esters to free cholesterol for steroid hormone production. The chain is Hormone-sensitive lipase (LIPE) from Bos taurus (Bovine).